The chain runs to 283 residues: Acetylglutamate kinase (283 aa).

Residues 63–64, Arg-85, and Asn-178 contribute to the substrate site; that span reads GG.

The protein belongs to the acetylglutamate kinase family. ArgB subfamily.

It is found in the plastid. The protein resides in the chloroplast. The enzyme catalyses N-acetyl-L-glutamate + ATP = N-acetyl-L-glutamyl 5-phosphate + ADP. The protein operates within amino-acid biosynthesis; L-arginine biosynthesis; N(2)-acetyl-L-ornithine from L-glutamate: step 2/4. Catalyzes the ATP-dependent phosphorylation of N-acetyl-L-glutamate. The protein is Acetylglutamate kinase of Porphyra purpurea (Red seaweed).